Reading from the N-terminus, the 600-residue chain is Oligopeptide-binding protein OppA (600 aa).

Residues Met-1–Ala-22 form the signal peptide. Cys-23 is lipidated: N-palmitoyl cysteine. A lipid anchor (S-diacylglycerol cysteine) is attached at Cys-23.

This sequence belongs to the bacterial solute-binding protein 5 family. The complex is composed of two ATP-binding proteins (OppD and OppF), two transmembrane proteins (OppB and OppC) and a solute-binding protein (OppA).

Its subcellular location is the cell membrane. Functionally, part of the ABC transporter complex OppABCDF involved in the uptake of oligopeptides. Essential for uptake of peptides larger than three amino acids and for growth in milk. This chain is Oligopeptide-binding protein OppA, found in Lactococcus lactis subsp. lactis (Streptococcus lactis).